The chain runs to 305 residues: Ribosomal RNA small subunit methyltransferase H (305 aa).

S-adenosyl-L-methionine-binding positions include G33–Y35, D51, F82, D96, and Q103.

The protein belongs to the methyltransferase superfamily. RsmH family.

The protein localises to the cytoplasm. It catalyses the reaction cytidine(1402) in 16S rRNA + S-adenosyl-L-methionine = N(4)-methylcytidine(1402) in 16S rRNA + S-adenosyl-L-homocysteine + H(+). Its function is as follows. Specifically methylates the N4 position of cytidine in position 1402 (C1402) of 16S rRNA. This chain is Ribosomal RNA small subunit methyltransferase H, found in Rickettsia bellii (strain OSU 85-389).